The sequence spans 1297 residues: DNA-directed RNA polymerase subunit beta' (1297 aa).

Residues Cys-60, Cys-62, Cys-75, and Cys-78 each contribute to the Zn(2+) site. Mg(2+) contacts are provided by Asp-535, Asp-537, and Asp-539. Zn(2+)-binding residues include Cys-883, Cys-961, Cys-968, and Cys-971.

The protein belongs to the RNA polymerase beta' chain family. The RNAP catalytic core consists of 2 alpha, 1 beta, 1 beta' and 1 omega subunit. When a sigma factor is associated with the core the holoenzyme is formed, which can initiate transcription. The cofactor is Mg(2+). Zn(2+) is required as a cofactor.

The catalysed reaction is RNA(n) + a ribonucleoside 5'-triphosphate = RNA(n+1) + diphosphate. Functionally, DNA-dependent RNA polymerase catalyzes the transcription of DNA into RNA using the four ribonucleoside triphosphates as substrates. In Salinispora arenicola (strain CNS-205), this protein is DNA-directed RNA polymerase subunit beta'.